We begin with the raw amino-acid sequence, 820 residues long: 1,4-alpha-glucan-branching enzyme, chloroplastic/amyloplastic (820 aa).

The segment covering 1 to 20 has biased composition (low complexity); it reads MLCLTSSSSSAPAPLLPSLA. The tract at residues 1 to 28 is disordered; sequence MLCLTSSSSSAPAPLLPSLADRPSPGIA. A chloroplast-targeting transit peptide spans 1–64; the sequence is MLCLTSSSSS…SVPATARKNK (64 aa). W153 and K188 together coordinate (1,4-alpha-D-glucosyl)n. The Nucleophile role is filled by D409. E464 (proton donor) is an active-site residue.

The protein belongs to the glycosyl hydrolase 13 family. GlgB subfamily. As to quaternary structure, monomer.

Its subcellular location is the plastid. The protein resides in the chloroplast. The protein localises to the amyloplast. The catalysed reaction is Transfers a segment of a (1-&gt;4)-alpha-D-glucan chain to a primary hydroxy group in a similar glucan chain.. Its pathway is glycan biosynthesis; starch biosynthesis. Its function is as follows. Catalyzes the formation of the alpha-1,6-glucosidic linkages in starch by scission of a 1,4-alpha-linked oligosaccharide from growing alpha-1,4-glucan chains and the subsequent attachment of the oligosaccharide to the alpha-1,6 position. This chain is 1,4-alpha-glucan-branching enzyme, chloroplastic/amyloplastic (SBE1), found in Oryza sativa subsp. japonica (Rice).